The sequence spans 366 residues: Palmitoyltransferase ZDHHC2 (366 aa).

The Cytoplasmic portion of the chain corresponds to 1–15 (MAPSGSGGVRRRCRR). The helical transmembrane segment at 16-36 (VLYWIPVVFISLLLGWSYYAY) threads the bilayer. The Lumenal segment spans residues 37–47 (AIQLCIVSMEN). A helical transmembrane segment spans residues 48–68 (IGEQVVCLMAYHLLFAMFVWS). Residues 69–169 (YWKTIFTLPM…NNCVGFSNYK (101 aa)) lie on the Cytoplasmic side of the membrane. One can recognise a DHHC domain in the interval 126–176 (RYCDRCQLIKPDRCHHCSVCDKCILKMDHHCPWVNNCVGFSNYKFFLLFLA). The active-site S-palmitoyl cysteine intermediate is the Cys156. A helical membrane pass occupies residues 170–190 (FFLLFLAYSLLYCLFIAATDL). At 191–207 (QYFIRFWTNGLPDTQAK) the chain is on the lumenal side. Residues 208–228 (FHIMFLFFAAAMFSVSLSSLF) traverse the membrane as a helical segment. At 229 to 366 (GYHCWLVSKN…NPALTMENET (138 aa)) the chain is on the cytoplasmic side. The span at 297 to 316 (VNQDPEQPSTPAGLNSTVKN) shows a compositional bias: polar residues. The interval 297–366 (VNQDPEQPST…NPALTMENET (70 aa)) is disordered. A mediates localization to plasma membrane and recycling endosomes region spans residues 298 to 366 (NQDPEQPSTP…NPALTMENET (69 aa)). Positions 326–336 (PLRESQSHLLK) are enriched in basic and acidic residues. Positions 334–335 (LL) match the Non-canonical dileucine endocytic signal motif. Residues 337–347 (DSQTWTESSAN) show a composition bias toward polar residues. Residues 357–360 (NPAL) carry the NPxY-like endocytic signal motif.

This sequence belongs to the DHHC palmitoyltransferase family. As to quaternary structure, monomer. Homodimer. The monomeric form has a higher catalytic activity. In terms of processing, autopalmitoylated. In terms of tissue distribution, expressed in all brain regions.

The protein localises to the postsynaptic density. It is found in the postsynaptic recycling endosome membrane. It localises to the cell membrane. The protein resides in the endoplasmic reticulum membrane. Its subcellular location is the golgi apparatus membrane. The enzyme catalyses L-cysteinyl-[protein] + hexadecanoyl-CoA = S-hexadecanoyl-L-cysteinyl-[protein] + CoA. It carries out the reaction L-cysteinyl-[protein] + tetradecanoyl-CoA = S-tetradecanoyl-L-cysteinyl-[protein] + CoA. It catalyses the reaction L-cysteinyl-[protein] + octadecanoyl-CoA = S-octadecanoyl-L-cysteinyl-[protein] + CoA. Palmitoyltransferase that catalyzes the addition of palmitate onto various protein substrates and is involved in a variety of cellular processes. Has no stringent fatty acid selectivity and in addition to palmitate can also transfer onto target proteins myristate from tetradecanoyl-CoA and stearate from octadecanoyl-CoA. In the nervous system, plays a role in long term synaptic potentiation by palmitoylating AKAP5 through which it regulates protein trafficking from the dendritic recycling endosomes to the plasma membrane and controls both structural and functional plasticity at excitatory synapses. In dendrites, mediates the palmitoylation of DLG4 when synaptic activity decreases and induces synaptic clustering of DLG4 and associated AMPA-type glutamate receptors. Also mediates the de novo and turnover palmitoylation of RGS7BP, a shuttle for Gi/o-specific GTPase-activating proteins/GAPs, promoting its localization to the plasma membrane in response to the activation of G protein-coupled receptors. Through the localization of these GTPase-activating proteins/GAPs, it also probably plays a role in G protein-coupled receptors signaling in neurons. Also probably plays a role in cell adhesion by palmitoylating CD9 and CD151 to regulate their expression and function. Palmitoylates the endoplasmic reticulum protein CKAP4 and regulates its localization to the plasma membrane. Could also palmitoylate LCK and regulate its localization to the plasma membrane. The chain is Palmitoyltransferase ZDHHC2 from Mus musculus (Mouse).